The following is a 158-amino-acid chain: Placenta growth factor (158 aa).

Residues 1–23 constitute a signal peptide (or 26); it reads MLAMKLFTCFLQVLAGLAVHSQG. Asparagine 29 and asparagine 30 each carry an N-linked (GlcNAc...) asparagine glycan. 3 disulfide bridges follow: cysteine 48-cysteine 90, cysteine 79-cysteine 125, and cysteine 83-cysteine 127. Residue asparagine 97 is glycosylated (N-linked (GlcNAc...) asparagine). The interval 136-158 is disordered; the sequence is AERRKTKGKRKQSKTPQTEEPHL. Residues 137 to 148 are compositionally biased toward basic residues; the sequence is ERRKTKGKRKQS.

Belongs to the PDGF/VEGF growth factor family. As to quaternary structure, antiparallel homodimer; disulfide-linked. Also found as heterodimer with VEGFA/VEGF.

The protein resides in the secreted. In terms of biological role, growth factor active in angiogenesis and endothelial cell growth, stimulating their proliferation and migration. It binds to the receptor FLT1/VEGFR-1. Also promotes cell tumor growth. This is Placenta growth factor (Pgf) from Rattus norvegicus (Rat).